A 209-amino-acid chain; its full sequence is Large ribosomal subunit protein uL3 (209 aa).

Q150 is subject to N5-methylglutamine.

The protein belongs to the universal ribosomal protein uL3 family. Part of the 50S ribosomal subunit. Forms a cluster with proteins L14 and L19. In terms of processing, methylated by PrmB.

Functionally, one of the primary rRNA binding proteins, it binds directly near the 3'-end of the 23S rRNA, where it nucleates assembly of the 50S subunit. The polypeptide is Large ribosomal subunit protein uL3 (Buchnera aphidicola subsp. Acyrthosiphon pisum (strain 5A)).